We begin with the raw amino-acid sequence, 590 residues long: Nuclear receptor subfamily 2 group C member 1 (590 aa).

The tract at residues Met1–Met166 is required for interaction with KAT2B. A DNA-binding region (nuclear receptor) is located at residues Phe98–Cys173. 2 consecutive NR C4-type zinc fingers follow at residues Cys101 to Cys121 and Cys137 to Cys156. A phosphoserine mark is found at Ser185 and Ser203. A Phosphothreonine modification is found at Thr208. Thr210 is subject to Phosphothreonine; by MAPK1. Lys238 participates in a covalent cross-link: Glycyl lysine isopeptide (Lys-Gly) (interchain with G-Cter in SUMO); alternate. A Glycyl lysine isopeptide (Lys-Gly) (interchain with G-Cter in SUMO2); alternate cross-link involves residue Lys238. Residues Glu333–Glu577 enclose the NR LBD domain. Position 568 is a phosphoserine; by PKC (Ser568). The required for interaction with NRIP1 stretch occupies residues Pro571 to Leu590. Residue Lys575 forms a Glycyl lysine isopeptide (Lys-Gly) (interchain with G-Cter in SUMO2) linkage.

Belongs to the nuclear hormone receptor family. NR2 subfamily. In terms of assembly, homodimer. Heterodimer; with NR2C2 which is required for chromatin remodeling and for binding to promoter regions such as globin DR1 repeats. Interacts with ESR1; the interaction prevents homodimerization of ESR1 and suppresses its transcriptional activity and cell growth. Interacts with NRIP1 (via its LXXLL motifs); the interaction provides corepressor activity. Interacts with HDAC3 (via the DNA-binding domain); the interaction recruits phosphorylated NR2C1 to PML bodies for sumoylation. Interacts with HDAC4 (via the DNA-binding domain). Interacts with PIAS1; the interaction is required for sumoylation of NR2C1. Interacts with UBE2I; the interaction is required for sumoylation of NR2C1. Interacts with KAT2B; the interaction acts as a corepressor of gene expression. Sumoylation requires both PIAS1 and UBE2I. Sumoylation appears to dissociate NR2C1 from the PML nuclear bodies. Enhances the interaction with NRIP1 but inhibits interaction with KAT2B. In proliferating cells, stimulation by all-trans retinoic acid, activation of MAPK1-mediated phosphorylation and recruitment to PML bodies with subsequent sumoylation, suppresses OCT4 expression. In terms of processing, phosphorylated on several serine and threonine residues. Phosphorylation on Thr-210, stimulated by all-trans retinoic acid (atRA) mediates PML location and sumoylation in proliferating cells which then modulates its association with effector molecules, KAT2B and NRIP1. Phosphorylation on Ser-568 by PKC is important for protein stability and function as activator of RARB.

Its subcellular location is the nucleus. It localises to the PML body. Functionally, orphan nuclear receptor. Binds the IR7 element in the promoter of its own gene in an autoregulatory negative feedback mechanism. Primarily repressor of a broad range of genes including ESR1 and RARB. Together with NR2C2, forms the core of the DRED (direct repeat erythroid-definitive) complex that represses embryonic and fetal globin transcription. Binds to hormone response elements (HREs) consisting of two 5'-AGGTCA-3' half site direct repeat consensus sequences. Also activator of OCT4 gene expression. Plays a fundamental role in early embryogenesis and regulates embryonic stem cell proliferation and differentiation. Mediator of retinoic acid-regulated preadipocyte proliferation. This Rattus norvegicus (Rat) protein is Nuclear receptor subfamily 2 group C member 1 (Nr2c1).